We begin with the raw amino-acid sequence, 32 residues long: ilv operon leader peptide (32 aa).

This protein is involved in control of the biosynthesis of isoleucine, leucine, and valine. The sequence is that of ilv operon leader peptide (ivbL) from Escherichia coli (strain K12).